A 972-amino-acid polypeptide reads, in one-letter code: Multiple C2 domain and transmembrane region protein 8 (972 aa).

Residues 1 to 107 (MMSNLKLGVE…PYSEAVGLPY (107 aa)) form the C2 1 domain. Residues 142–203 (PNLISTKKIP…MMESSLYQAP (62 aa)) are disordered. Positions 150 to 159 (IPSKSRHKFH) are enriched in basic residues. Residues 161-173 (IPTNESNHSPRGN) are compositionally biased toward polar residues. Pro residues predominate over residues 179–194 (PQPPPPQSQTALPPPM). C2 domains lie at 232 to 352 (GGGK…PEWY), 384 to 507 (ALNA…NRWF), and 543 to 669 (YSSD…SHSY). 5 residues coordinate Ca(2+): Asp-265, Asp-271, Asp-318, Asp-320, and Asp-325. 2 helical membrane passes run 803 to 823 (IIFLVLVCSPEMILPVMSLCL) and 924 to 944 (TVVLYVVPFKVFVLLAGLYIM).

It belongs to the MCTP family. Ca(2+) serves as cofactor. In terms of tissue distribution, expressed in root hairs.

It localises to the membrane. The protein resides in the vesicle. Its function is as follows. May function as a signaling molecule by regulating the trafficking of other regulators. This chain is Multiple C2 domain and transmembrane region protein 8, found in Arabidopsis thaliana (Mouse-ear cress).